The following is a 429-amino-acid chain: Adenylosuccinate synthetase (429 aa).

GTP contacts are provided by residues 12-18 and 40-42; these read GDEGKGK and GHT. Catalysis depends on Asp-13, which acts as the Proton acceptor. Mg(2+) is bound by residues Asp-13 and Gly-40. Residues 13 to 16, 38 to 41, Thr-129, Arg-143, Gln-223, Thr-238, and Arg-302 contribute to the IMP site; these read DEGK and NAGH. The active-site Proton donor is His-41. 298–304 contributes to the substrate binding site; that stretch reads TVTGRPR. GTP contacts are provided by residues Arg-304, 330-332, and 412-414; these read KLD and STS.

Belongs to the adenylosuccinate synthetase family. As to quaternary structure, homodimer. Mg(2+) serves as cofactor.

Its subcellular location is the cytoplasm. It carries out the reaction IMP + L-aspartate + GTP = N(6)-(1,2-dicarboxyethyl)-AMP + GDP + phosphate + 2 H(+). It participates in purine metabolism; AMP biosynthesis via de novo pathway; AMP from IMP: step 1/2. Plays an important role in the de novo pathway of purine nucleotide biosynthesis. Catalyzes the first committed step in the biosynthesis of AMP from IMP. This is Adenylosuccinate synthetase from Gluconobacter oxydans (strain 621H) (Gluconobacter suboxydans).